A 344-amino-acid polypeptide reads, in one-letter code: Lipase chaperone (344 aa).

Residues 14-34 form a helical membrane-spanning segment; sequence VAVYGAVGLAAIAGVAIWSGA. The segment covering 45-57 has biased composition (low complexity); that stretch reads LSADAAARDGASA. A disordered region spans residues 45 to 78; sequence LSADAAARDGASAAPPPPARPASAGMPSPLAGSS.

The protein belongs to the lipase chaperone family.

The protein resides in the cell inner membrane. May be involved in the folding of the extracellular lipase during its passage through the periplasm. In Burkholderia ambifaria (strain ATCC BAA-244 / DSM 16087 / CCUG 44356 / LMG 19182 / AMMD) (Burkholderia cepacia (strain AMMD)), this protein is Lipase chaperone.